A 468-amino-acid chain; its full sequence is Hydroxymethylglutaryl-CoA synthase B (468 aa).

The active-site Proton donor/acceptor is glutamate 85. Residue cysteine 119 is the Acyl-thioester intermediate of the active site. Positions 119, 161, 211, 250, 259, 327, and 359 each coordinate (3S)-3-hydroxy-3-methylglutaryl-CoA. Catalysis depends on histidine 250, which acts as the Proton donor/acceptor.

It belongs to the thiolase-like superfamily. HMG-CoA synthase family.

It carries out the reaction acetoacetyl-CoA + acetyl-CoA + H2O = (3S)-3-hydroxy-3-methylglutaryl-CoA + CoA + H(+). Its pathway is metabolic intermediate biosynthesis; (R)-mevalonate biosynthesis; (R)-mevalonate from acetyl-CoA: step 2/3. Functionally, condenses acetyl-CoA with acetoacetyl-CoA to form HMG-CoA, which is the substrate for HMG-CoA reductase. This chain is Hydroxymethylglutaryl-CoA synthase B (hgsB), found in Dictyostelium discoideum (Social amoeba).